Consider the following 382-residue polypeptide: Hyaluronidase (382 aa).

Residues 1–28 (MSRPLVITEGMMIGVLLMLAPINALLLG) constitute a signal peptide (or 24). A propeptide spanning residues 29 to 33 (FVQST) is cleaved from the precursor. 2 disulfide bridges follow: C54-C345 and C221-C233. N115 is a glycosylation site (N-linked (GlcNAc...) asparagine). E145 serves as the catalytic Proton donor. N263 carries an N-linked (GlcNAc...) (complex) asparagine glycan.

This sequence belongs to the glycosyl hydrolase 56 family. Homotetramer. N-glycosylated. Glycans found include a majority of small oligosaccharides (Man1-3GlcNAc2), most of which are either alpha 1,3-monofucosylated or alpha 1,3-(alpha 1,6-)difucosylated at the innermost GlcNAc residue, approximately 5% of high-mannose type structures, and 8% contains the terminal trisaccharide GalNAc beta 1-4[Fuc alpha 1-3]GlcNAc beta 1-in beta 1,2-linkage to the core alpha 1,3-mannosyl residue. As to expression, expressed in the venom glands of worker bees. It is also detected in the testes of drones but not in the queen-bee venom glands or in pupae.

The protein resides in the secreted. The catalysed reaction is Random hydrolysis of (1-&gt;4)-linkages between N-acetyl-beta-D-glucosamine and D-glucuronate residues in hyaluronate.. Its function is as follows. Hydrolyzes high molecular weight hyaluronic acid to produce small oligosaccharides. The sequence is that of Hyaluronidase from Apis mellifera (Honeybee).